Reading from the N-terminus, the 240-residue chain is Ubiquinone biosynthesis O-methyltransferase (240 aa).

S-adenosyl-L-methionine-binding residues include Arg-44, Gly-64, Asp-85, and Met-129.

Belongs to the methyltransferase superfamily. UbiG/COQ3 family.

It catalyses the reaction a 3-demethylubiquinol + S-adenosyl-L-methionine = a ubiquinol + S-adenosyl-L-homocysteine + H(+). The enzyme catalyses a 3-(all-trans-polyprenyl)benzene-1,2-diol + S-adenosyl-L-methionine = a 2-methoxy-6-(all-trans-polyprenyl)phenol + S-adenosyl-L-homocysteine + H(+). The protein operates within cofactor biosynthesis; ubiquinone biosynthesis. O-methyltransferase that catalyzes the 2 O-methylation steps in the ubiquinone biosynthetic pathway. The chain is Ubiquinone biosynthesis O-methyltransferase from Escherichia coli O6:K15:H31 (strain 536 / UPEC).